Here is a 238-residue protein sequence, read N- to C-terminus: ATP synthase subunit a (238 aa).

5 helical membrane passes run 18-38 (MSTV…TFIG), 76-96 (FIVL…LGLP), 117-137 (VLTL…GIKI), 195-215 (LIGM…GLFI), and 216-236 (GAIQ…HKVE).

This sequence belongs to the ATPase A chain family. F-type ATPases have 2 components, CF(1) - the catalytic core - and CF(0) - the membrane proton channel. CF(1) has five subunits: alpha(3), beta(3), gamma(1), delta(1), epsilon(1). CF(0) has three main subunits: a(1), b(2) and c(9-12). The alpha and beta chains form an alternating ring which encloses part of the gamma chain. CF(1) is attached to CF(0) by a central stalk formed by the gamma and epsilon chains, while a peripheral stalk is formed by the delta and b chains.

The protein localises to the cell membrane. Key component of the proton channel; it plays a direct role in the translocation of protons across the membrane. The chain is ATP synthase subunit a from Alkalihalophilus pseudofirmus (strain ATCC BAA-2126 / JCM 17055 / OF4) (Bacillus pseudofirmus).